The chain runs to 1168 residues: Carboxylic acid reductase (1168 aa).

AMP is bound by residues His290, Ser385, Glu407–Gly408, Thr412, Asp485, Tyr497–Arg500, Lys506, and Lys606. The Carrier domain occupies Ala645 to Arg720. Ser679 carries the post-translational modification O-(pantetheine 4'-phosphoryl)serine. Residues Thr777 to Leu780, Arg804, Arg814, Asp844 to Lys845, Pro870 to Ala872, Ser910, Tyr946, and Lys950 each bind NADP(+).

Belongs to the ATP-dependent AMP-binding enzyme family. Carboxylic acid reductase subfamily. Pantetheine 4'-phosphate serves as cofactor.

The catalysed reaction is a carboxylate + ATP + NADPH + H(+) = an aldehyde + AMP + diphosphate + NADP(+). It carries out the reaction a medium-chain fatty acid + ATP + H(+) = a medium-chain fatty acyl-AMP + diphosphate. The enzyme catalyses a long-chain fatty acid + ATP + H(+) = a long-chain fatty acyl-AMP + diphosphate. It catalyses the reaction dodecanoate + ATP + H(+) = dodecanoyl-AMP + diphosphate. The catalysed reaction is hexadecanoate + ATP + H(+) = hexadecanoyl-AMP + diphosphate. Its function is as follows. Catalyzes the ATP- and NADPH-dependent reduction of carboxylic acids to the corresponding aldehydes. In vitro, also catalyzes the activation of medium/long-chain fatty acids as acyl-adenylates (acyl-AMP). The chain is Carboxylic acid reductase from Mycobacterium tuberculosis (strain ATCC 25618 / H37Rv).